The following is a 102-amino-acid chain: Probable non-specific lipid-transfer protein (102 aa).

Positions Met-1–Ala-35 are cleaved as a signal peptide. 4 cysteine pairs are disulfide-bonded: Cys-37/Cys-71, Cys-45/Cys-59, Cys-60/Cys-95, and Cys-69/Cys-102.

Belongs to the plant LTP family. B11E subfamily. In terms of tissue distribution, aleurone.

Its function is as follows. Potential phospholipid transfer protein. This chain is Probable non-specific lipid-transfer protein (LTP2), found in Hordeum vulgare (Barley).